A 196-amino-acid chain; its full sequence is Peptidyl-tRNA hydrolase (196 aa).

Tyr21 provides a ligand contact to tRNA. His26 (proton acceptor) is an active-site residue. Residues Phe72, Asn74, and Asn120 each coordinate tRNA.

This sequence belongs to the PTH family. As to quaternary structure, monomer.

It localises to the cytoplasm. The catalysed reaction is an N-acyl-L-alpha-aminoacyl-tRNA + H2O = an N-acyl-L-amino acid + a tRNA + H(+). Hydrolyzes ribosome-free peptidyl-tRNAs (with 1 or more amino acids incorporated), which drop off the ribosome during protein synthesis, or as a result of ribosome stalling. In terms of biological role, catalyzes the release of premature peptidyl moieties from peptidyl-tRNA molecules trapped in stalled 50S ribosomal subunits, and thus maintains levels of free tRNAs and 50S ribosomes. The protein is Peptidyl-tRNA hydrolase of Mycobacteroides abscessus (strain ATCC 19977 / DSM 44196 / CCUG 20993 / CIP 104536 / JCM 13569 / NCTC 13031 / TMC 1543 / L948) (Mycobacterium abscessus).